Here is a 301-residue protein sequence, read N- to C-terminus: Glycine--tRNA ligase alpha subunit (301 aa).

It belongs to the class-II aminoacyl-tRNA synthetase family. As to quaternary structure, tetramer of two alpha and two beta subunits.

It localises to the cytoplasm. The enzyme catalyses tRNA(Gly) + glycine + ATP = glycyl-tRNA(Gly) + AMP + diphosphate. This chain is Glycine--tRNA ligase alpha subunit, found in Nitrosospira multiformis (strain ATCC 25196 / NCIMB 11849 / C 71).